The sequence spans 142 residues: Large ribosomal subunit protein uL13 (142 aa).

Belongs to the universal ribosomal protein uL13 family. Part of the 50S ribosomal subunit.

In terms of biological role, this protein is one of the early assembly proteins of the 50S ribosomal subunit, although it is not seen to bind rRNA by itself. It is important during the early stages of 50S assembly. The polypeptide is Large ribosomal subunit protein uL13 (Cupriavidus necator (strain ATCC 17699 / DSM 428 / KCTC 22496 / NCIMB 10442 / H16 / Stanier 337) (Ralstonia eutropha)).